Reading from the N-terminus, the 323-residue chain is Protoheme IX farnesyltransferase (323 aa).

Helical transmembrane passes span 28–48, 50–70, 101–121, 122–142, 150–170, 178–198, 235–255, and 282–302; these read IIPL…EGRV, LFTL…AQVM, FIFA…FVNL, LSGL…THLL, IVIG…AVTG, ILFA…ALMI, FLLV…AIIL, and FSIF…LPLT.

This sequence belongs to the UbiA prenyltransferase family. Protoheme IX farnesyltransferase subfamily.

The protein resides in the cell inner membrane. It catalyses the reaction heme b + (2E,6E)-farnesyl diphosphate + H2O = Fe(II)-heme o + diphosphate. The protein operates within porphyrin-containing compound metabolism; heme O biosynthesis; heme O from protoheme: step 1/1. Its function is as follows. Converts heme B (protoheme IX) to heme O by substitution of the vinyl group on carbon 2 of heme B porphyrin ring with a hydroxyethyl farnesyl side group. The polypeptide is Protoheme IX farnesyltransferase (Rippkaea orientalis (strain PCC 8801 / RF-1) (Cyanothece sp. (strain PCC 8801))).